We begin with the raw amino-acid sequence, 124 residues long: Small ribosomal subunit protein eS8 (124 aa).

Positions 1 to 22 (MQYQGRSKRSKTGARLRPRSKK) are enriched in basic residues. 2 disordered regions span residues 1–40 (MQYQ…GEPR) and 102–124 (AGTA…RVDE). Residues 23 to 32 (SKSELGREPT) show a composition bias toward basic and acidic residues. The span at 106–124 (RVTSRPGQDGQVNATRVDE) shows a compositional bias: polar residues.

Belongs to the eukaryotic ribosomal protein eS8 family. In terms of assembly, part of the 30S ribosomal subunit.

The chain is Small ribosomal subunit protein eS8 from Halobacterium salinarum (strain ATCC 29341 / DSM 671 / R1).